The sequence spans 253 residues: Probable transcriptional regulatory protein Mmar10_2433 (253 aa).

Belongs to the TACO1 family.

It localises to the cytoplasm. The sequence is that of Probable transcriptional regulatory protein Mmar10_2433 from Maricaulis maris (strain MCS10) (Caulobacter maris).